We begin with the raw amino-acid sequence, 357 residues long: tRNA/tmRNA (uracil-C(5))-methyltransferase (357 aa).

Positions 180, 209, 214, 230, and 290 each coordinate S-adenosyl-L-methionine. Cys315 acts as the Nucleophile in catalysis. Residue Glu349 is the Proton acceptor of the active site.

It belongs to the class I-like SAM-binding methyltransferase superfamily. RNA M5U methyltransferase family. TrmA subfamily.

The catalysed reaction is uridine(54) in tRNA + S-adenosyl-L-methionine = 5-methyluridine(54) in tRNA + S-adenosyl-L-homocysteine + H(+). The enzyme catalyses uridine(341) in tmRNA + S-adenosyl-L-methionine = 5-methyluridine(341) in tmRNA + S-adenosyl-L-homocysteine + H(+). Its function is as follows. Dual-specificity methyltransferase that catalyzes the formation of 5-methyluridine at position 54 (m5U54) in all tRNAs, and that of position 341 (m5U341) in tmRNA (transfer-mRNA). In Campylobacter jejuni (strain RM1221), this protein is tRNA/tmRNA (uracil-C(5))-methyltransferase.